A 165-amino-acid polypeptide reads, in one-letter code: Large ribosomal subunit protein uL10 (165 aa).

This sequence belongs to the universal ribosomal protein uL10 family. As to quaternary structure, part of the ribosomal stalk of the 50S ribosomal subunit. The N-terminus interacts with L11 and the large rRNA to form the base of the stalk. The C-terminus forms an elongated spine to which L12 dimers bind in a sequential fashion forming a multimeric L10(L12)X complex.

In terms of biological role, forms part of the ribosomal stalk, playing a central role in the interaction of the ribosome with GTP-bound translation factors. The protein is Large ribosomal subunit protein uL10 of Mycoplasma mycoides subsp. mycoides SC (strain CCUG 32753 / NCTC 10114 / PG1).